Reading from the N-terminus, the 602-residue chain is Elongation factor 4 (602 aa).

The region spanning 7–189 (KRVRNFSIIA…AVVEKVPYPK (183 aa)) is the tr-type G domain. GTP-binding positions include 19 to 24 (DHGKST) and 136 to 139 (NKID).

This sequence belongs to the TRAFAC class translation factor GTPase superfamily. Classic translation factor GTPase family. LepA subfamily.

The protein localises to the cell membrane. The catalysed reaction is GTP + H2O = GDP + phosphate + H(+). In terms of biological role, required for accurate and efficient protein synthesis under certain stress conditions. May act as a fidelity factor of the translation reaction, by catalyzing a one-codon backward translocation of tRNAs on improperly translocated ribosomes. Back-translocation proceeds from a post-translocation (POST) complex to a pre-translocation (PRE) complex, thus giving elongation factor G a second chance to translocate the tRNAs correctly. Binds to ribosomes in a GTP-dependent manner. The polypeptide is Elongation factor 4 (Clostridium tetani (strain Massachusetts / E88)).